Reading from the N-terminus, the 433-residue chain is tRNA (guanine(10)-N(2))-methyltransferase (433 aa).

This sequence belongs to the class I-like SAM-binding methyltransferase superfamily. TRM11 methyltransferase family. Interacts with TRM112.

It localises to the cytoplasm. The catalysed reaction is guanosine(10) in tRNA + S-adenosyl-L-methionine = N(2)-methylguanosine(10) in tRNA + S-adenosyl-L-homocysteine + H(+). Catalytic subunit of an S-adenosyl-L-methionine-dependent tRNA methyltransferase complex that mediates the methylation of the guanosine nucleotide at position 10 (m2G10) in tRNAs. In Saccharomyces cerevisiae (strain ATCC 204508 / S288c) (Baker's yeast), this protein is tRNA (guanine(10)-N(2))-methyltransferase (TRM11).